We begin with the raw amino-acid sequence, 389 residues long: Putative glutamate--cysteine ligase 2 (389 aa).

This sequence belongs to the glutamate--cysteine ligase type 2 family. YbdK subfamily.

It carries out the reaction L-cysteine + L-glutamate + ATP = gamma-L-glutamyl-L-cysteine + ADP + phosphate + H(+). ATP-dependent carboxylate-amine ligase which exhibits weak glutamate--cysteine ligase activity. The chain is Putative glutamate--cysteine ligase 2 from Rhodospirillum rubrum (strain ATCC 11170 / ATH 1.1.1 / DSM 467 / LMG 4362 / NCIMB 8255 / S1).